Reading from the N-terminus, the 199-residue chain is Chromophore lyase CpcT/CpeT 2 (199 aa).

Belongs to the CpcT/CpeT biliprotein lyase family.

Functionally, covalently attaches a chromophore to Cys residue(s) of phycobiliproteins. The polypeptide is Chromophore lyase CpcT/CpeT 2 (Synechococcus sp. (strain JA-3-3Ab) (Cyanobacteria bacterium Yellowstone A-Prime)).